Here is a 39-residue protein sequence, read N- to C-terminus: Photosystem II reaction center protein L (39 aa).

A helical membrane pass occupies residues 18 to 38; that stretch reads SLYLGVLSVLVLGILFSSYFF.

This sequence belongs to the PsbL family. In terms of assembly, PSII is composed of 1 copy each of membrane proteins PsbA, PsbB, PsbC, PsbD, PsbE, PsbF, PsbH, PsbI, PsbJ, PsbK, PsbL, PsbM, PsbT, PsbX, PsbY, Psb30/Ycf12, peripheral proteins PsbO, CyanoQ (PsbQ), PsbU, PsbV and a large number of cofactors. It forms dimeric complexes.

It is found in the cellular thylakoid membrane. Functionally, one of the components of the core complex of photosystem II (PSII). PSII is a light-driven water:plastoquinone oxidoreductase that uses light energy to abstract electrons from H(2)O, generating O(2) and a proton gradient subsequently used for ATP formation. It consists of a core antenna complex that captures photons, and an electron transfer chain that converts photonic excitation into a charge separation. This subunit is found at the monomer-monomer interface and is required for correct PSII assembly and/or dimerization. The sequence is that of Photosystem II reaction center protein L from Prochlorococcus marinus (strain MIT 9515).